The sequence spans 2083 residues: Centriole proteome protein 16 (2083 aa).

Residues 205-333 (DAPTMDFMPP…PAVPPPLSPS (129 aa)) form a disordered region. Residues 227–245 (TAETADTAGAAGRKSLSGA) show a composition bias toward low complexity. Residues 246–258 (SAGGAGPAKGGAK) show a composition bias toward gly residues. Low complexity-rich tracts occupy residues 259–274 (AGAA…SAGA) and 283–292 (GSTAGAATPG). Over residues 302 to 315 (GEEDFEDDLSEDLD) the composition is skewed to acidic residues. The segment covering 319–331 (PLPPSPAVPPPLS) has biased composition (pro residues). WD repeat units follow at residues 482–523 (GHTA…CLAI), 526–569 (AHAS…AAGG), 579–620 (ATEY…GTSV), 689–726 (LHAA…YLLE), 728–767 (EHEG…YTTL), 770–809 (SHCG…QLYE), 812–853 (APGE…LLQE), 856–895 (QHRA…APAQ), 990–1029 (VSPL…ALRG), and 1041–1079 (GHPS…MQQE). 2 disordered regions span residues 1113–1141 (HTQA…VASA) and 1225–1276 (ALVV…PPPP). Over residues 1263–1276 (VPLPPSPQPLPPPP) the composition is skewed to pro residues. WD repeat units follow at residues 1326 to 1365 (GHNR…RAAQ), 1403 to 1444 (YHPL…LVAA), 1448 to 1486 (EQSP…LEQR), 1497 to 1539 (RDPR…QPPQ), 1651 to 1691 (GQAA…AEPA), 1736 to 1781 (DPLD…QLSW), and 1785 to 1824 (RHPA…LVSY). Residues 1713-1743 (APAHTLRHPPSAAPSSAASSSPLDPLDPLPA) form a disordered region. Over residues 1720–1743 (HPPSAAPSSAASSSPLDPLDPLPA) the composition is skewed to low complexity. The tract at residues 1832-1870 (GPTPHSPGGTGRRSPRGAASPPPAPPRPGTGPLQAMAVS) is disordered. Residues 1851 to 1860 (SPPPAPPRPG) show a composition bias toward pro residues. The stretch at 2035 to 2073 (GHAGAVAAASYTGDGGHAVTASGSVLMVWDAAQLLKGVT) is one WD 18 repeat.

Belongs to the WD repeat WDR90/POC16 family.

It is found in the cytoplasm. Its subcellular location is the cytoskeleton. The protein localises to the microtubule organizing center. The protein resides in the centrosome. It localises to the centriole. Its function is as follows. Required for flagellum assembly and/or maintenance. This is Centriole proteome protein 16 from Chlamydomonas reinhardtii (Chlamydomonas smithii).